The chain runs to 319 residues: Cobalamin biosynthesis protein CbiB (319 aa).

4 consecutive transmembrane segments (helical) span residues 56–76 (VMWVVVVGVTWGVAWGVLALA), 82–102 (WFGWSVEVWMIFTTLAGRSLA), 153–173 (VDGIIAPLFFLFLGGAPLAMA), and 296–316 (LMWVASTLALALFIAARCGLS).

The protein belongs to the CobD/CbiB family.

The protein resides in the cell membrane. The protein operates within cofactor biosynthesis; adenosylcobalamin biosynthesis. Its function is as follows. Converts cobyric acid to cobinamide by the addition of aminopropanol on the F carboxylic group. However, the true cosubstrate could be (R)-1-amino-2-propanol O-2-phosphate, leading to cobinamide phosphate. The protein is Cobalamin biosynthesis protein CbiB of Salmonella paratyphi A (strain ATCC 9150 / SARB42).